We begin with the raw amino-acid sequence, 819 residues long: Glycine-rich domain-containing protein 1 (819 aa).

In terms of biological role, plays a regulatory role in abscisic acid (ABA) signaling and tolerance to abiotic stress during germination. May be involved in the regulation of the ABI transcriptional factors. The polypeptide is Glycine-rich domain-containing protein 1 (Arabidopsis thaliana (Mouse-ear cress)).